The primary structure comprises 740 residues: MTENHDAIVTDAKSEGSGGCPVAHDRALHPTQGGGNRQWWPERLNLKILAKNPAVANPLDEDFDYAEAFKALDLAAVKRDIAEVLTTSQDWWPADFGNYGPLMIRMAWHSAGTYRISDGRGGAGAGQQRFAPLNSWPDNGNLDKARRLLWPVKKKYGQSISWADLLILTGNVALETMGFKTFGFGGGRADVWEAEEDVYWGPETTWLDDRRYTGDRELENPLGAVQMGLIYVNPEGPNGNPDPIAAARDIRETFRRMAMNDEETVALIAGGHTFGKTHGAGPADHVGADPEAASLEEQGLGWRSTYGTGKGADAITSGLEVTWTSTPTQWSNGFFKNLFEYEYELEQSPAGAHQWVAKNAPEIIPDAHDPSKKHRPRMLTTDLSLRFDPIYEPISRRFYENPEEFADAFARAWYKLTHRDMGPKSLYLGPEVPEETLLWQDPLPEREGELIDDADIAILKTKLLESGLSVSQLVTTAWASASTFRASDKRGGANGARIRLAPQRGWEVNDPDQLAQVLRTLENVQQEFNASSGAKKVSLADLIVLGGAAGVEKAAKEAGFEIQVPFTPGRVDATEEHTDVESFEALEPTADGFRNYLGKGNRLPAEYLLLDKANLLNLSAPEMTVLVGGLRVLGANHQQSQLGVFTKTPGVLTNDFFVNLLDMGTTWKATSEDQTTFEGRDAATGEVKWAGSRADLVFGSNSELRALAEVYASDDAKEKFVKDFVAAWHKVMDADRFDLV.

A compositionally biased stretch (basic and acidic residues) spans 1–14; the sequence is MTENHDAIVTDAKS. The tract at residues 1 to 21 is disordered; sequence MTENHDAIVTDAKSEGSGGCP. Positions 108–231 form a cross-link, tryptophyl-tyrosyl-methioninium (Trp-Tyr) (with M-257); the sequence is WHSAGTYRIS…LGAVQMGLIY (124 aa). The active-site Proton acceptor is His-109. The segment at residues 231–257 is a cross-link (tryptophyl-tyrosyl-methioninium (Tyr-Met) (with W-108)); that stretch reads YVNPEGPNGNPDPIAAARDIRETFRRM. Residue His-272 coordinates heme b.

It belongs to the peroxidase family. Peroxidase/catalase subfamily. Homodimer. It depends on heme b as a cofactor. Post-translationally, formation of the three residue Trp-Tyr-Met cross-link is important for the catalase, but not the peroxidase activity of the enzyme.

The enzyme catalyses H2O2 + AH2 = A + 2 H2O. It carries out the reaction 2 H2O2 = O2 + 2 H2O. In terms of biological role, bifunctional enzyme with both catalase and broad-spectrum peroxidase activity. This Streptomyces reticuli protein is Catalase-peroxidase.